The sequence spans 503 residues: Maturase K (503 aa).

The protein belongs to the intron maturase 2 family. MatK subfamily.

It localises to the plastid. It is found in the chloroplast. In terms of biological role, usually encoded in the trnK tRNA gene intron. Probably assists in splicing its own and other chloroplast group II introns. This Rhamnus cathartica (Common buckthorn) protein is Maturase K.